Consider the following 538-residue polypeptide: Ribulokinase 1 (538 aa).

Belongs to the ribulokinase family.

The enzyme catalyses D-ribulose + ATP = D-ribulose 5-phosphate + ADP + H(+). The catalysed reaction is L-ribulose + ATP = L-ribulose 5-phosphate + ADP + H(+). Its pathway is carbohydrate degradation; L-arabinose degradation via L-ribulose; D-xylulose 5-phosphate from L-arabinose (bacterial route): step 2/3. The protein is Ribulokinase 1 of Staphylococcus saprophyticus subsp. saprophyticus (strain ATCC 15305 / DSM 20229 / NCIMB 8711 / NCTC 7292 / S-41).